The following is a 116-amino-acid chain: Flagellar transcriptional regulator FlhD (116 aa).

Belongs to the FlhD family. In terms of assembly, homodimer; disulfide-linked. Forms a heterohexamer composed of two FlhC and four FlhD subunits. Each FlhC binds a FlhD dimer, forming a heterotrimer, and a hexamer assembles by dimerization of two heterotrimers.

It localises to the cytoplasm. Functionally, functions in complex with FlhC as a master transcriptional regulator that regulates transcription of several flagellar and non-flagellar operons by binding to their promoter region. Activates expression of class 2 flagellar genes, including fliA, which is a flagellum-specific sigma factor that turns on the class 3 genes. Also regulates genes whose products function in a variety of physiological pathways. In Escherichia coli O9:H4 (strain HS), this protein is Flagellar transcriptional regulator FlhD.